Consider the following 567-residue polypeptide: Glucose-6-phosphate isomerase, cytosolic B (567 aa).

Residues 156–157 (GS), 212–217 (SKTFTT), Gln-356, Glu-360, His-391, and Lys-516 contribute to the D-glucose 6-phosphate site. Glu-360 functions as the Proton donor in the catalytic mechanism. Residues His-391 and Lys-516 contribute to the active site.

This sequence belongs to the GPI family. In terms of assembly, homodimer.

Its subcellular location is the cytoplasm. It carries out the reaction alpha-D-glucose 6-phosphate = beta-D-fructose 6-phosphate. It functions in the pathway carbohydrate degradation; glycolysis; D-glyceraldehyde 3-phosphate and glycerone phosphate from D-glucose: step 2/4. Its function is as follows. Catalyzes the conversion of glucose-6-phosphate to fructose-6-phosphate, the second step in glycolysis, and the reverse reaction during gluconeogenesis. In Oryza sativa subsp. japonica (Rice), this protein is Glucose-6-phosphate isomerase, cytosolic B.